Here is a 439-residue protein sequence, read N- to C-terminus: Tol-Pal system protein TolB (439 aa).

The first 24 residues, 1–24, serve as a signal peptide directing secretion; that stretch reads MRNGMRKIIAGVFIFVFLISNLYA.

The protein belongs to the TolB family. The Tol-Pal system is composed of five core proteins: the inner membrane proteins TolA, TolQ and TolR, the periplasmic protein TolB and the outer membrane protein Pal. They form a network linking the inner and outer membranes and the peptidoglycan layer.

The protein localises to the periplasm. Part of the Tol-Pal system, which plays a role in outer membrane invagination during cell division and is important for maintaining outer membrane integrity. This Francisella tularensis subsp. tularensis (strain FSC 198) protein is Tol-Pal system protein TolB.